Consider the following 587-residue polypeptide: Aspartate--tRNA(Asp/Asn) ligase (587 aa).

Glutamate 173 lines the L-aspartate pocket. The interval glutamine 197–lysine 200 is aspartate. An L-aspartate-binding site is contributed by arginine 219. Residues arginine 219–glutamate 221 and glutamine 228 contribute to the ATP site. Histidine 448 provides a ligand contact to L-aspartate. Glutamate 481 is a binding site for ATP. Arginine 488 contributes to the L-aspartate binding site. Glycine 533 to arginine 536 serves as a coordination point for ATP.

This sequence belongs to the class-II aminoacyl-tRNA synthetase family. Type 1 subfamily. As to quaternary structure, homodimer.

Its subcellular location is the cytoplasm. It catalyses the reaction tRNA(Asx) + L-aspartate + ATP = L-aspartyl-tRNA(Asx) + AMP + diphosphate. Functionally, aspartyl-tRNA synthetase with relaxed tRNA specificity since it is able to aspartylate not only its cognate tRNA(Asp) but also tRNA(Asn). Reaction proceeds in two steps: L-aspartate is first activated by ATP to form Asp-AMP and then transferred to the acceptor end of tRNA(Asp/Asn). This is Aspartate--tRNA(Asp/Asn) ligase from Alcanivorax borkumensis (strain ATCC 700651 / DSM 11573 / NCIMB 13689 / SK2).